We begin with the raw amino-acid sequence, 37 residues long: U10-ctenitoxin-Co1a (37 aa).

4 cysteine pairs are disulfide-bonded: cysteine 2–cysteine 17, cysteine 9–cysteine 22, cysteine 16–cysteine 33, and cysteine 24–cysteine 31.

Expressed by the venom gland.

It localises to the secreted. Functionally, antagonist of L-type calcium channels (Cav1/CACNA1). This Ctenus ornatus (Brazilian spider) protein is U10-ctenitoxin-Co1a.